Consider the following 1441-residue polypeptide: ABC transporter G family member 51 (1441 aa).

A disordered region spans residues 52–71 (VLPDPDGLGGGDGGGRGEGQ). Positions 58–69 (GLGGGDGGGRGE) are enriched in gly residues. The 275-residue stretch at 154 to 428 (LISSHLLRPD…FKSLGFSLPP (275 aa)) folds into the ABC transporter 1 domain. 187-194 (GPPASGKS) is a binding site for ATP. One can recognise an ABC transmembrane type-2 1 domain in the interval 505–718 (SLVRACFARE…AQRAVSVNEF (214 aa)). The next 6 helical transmembrane spans lie at 523-543 (FLYT…STLF), 558-578 (LYLA…FTEM), 615-635 (FIEA…APTV), 642-662 (MLLL…MGAI), 668-688 (IAST…GFVV), and 751-771 (FWIG…MFTL). Residues 838–1090 (MTFHNVNYYV…DMINYFQGIP (253 aa)) enclose the ABC transporter 2 domain. 883 to 890 (GASGSGKT) provides a ligand contact to ATP. Residues 1163–1380 (TQFMVCLRKQ…TLRGVITSQL (218 aa)) enclose the ABC transmembrane type-2 2 domain. 7 helical membrane passes run 1184–1204 (VVRL…FWNV), 1214–1234 (ILLL…NNAS), 1271–1291 (VEIP…YFMV), 1300–1320 (LVLY…YGMV), 1330–1350 (MASV…GFLI), 1355–1375 (IPGW…LRGV), and 1413–1433 (ATVA…AISI).

It belongs to the ABC transporter superfamily. ABCG family. PDR (TC 3.A.1.205) subfamily.

The protein localises to the membrane. Its function is as follows. May be a general defense protein. This Oryza sativa subsp. japonica (Rice) protein is ABC transporter G family member 51.